Consider the following 468-residue polypeptide: Intramembrane protease 2 (468 aa).

Topologically, residues 1–22 are lumenal; it reads MAEAATEIPPTASNVTVFTFEE. N14 carries an N-linked (GlcNAc...) asparagine glycan. A helical transmembrane segment spans residues 23 to 43; it reads QATSSLALYGMSILCIIIGSI. The Cytoplasmic segment spans residues 44-70; it reads RSAQYIRTNIDKKRLIEGSITMREARK. The helical transmembrane segment at 71–91 threads the bilayer; that stretch reads FPISASLVLFGLYLFFKPAAE. The Lumenal segment spans residues 92–168; the sequence is RFLWVARVFQ…TNLPTIQKAE (77 aa). N-linked (GlcNAc...) asparagine glycosylation is found at N114 and N123. A helical transmembrane segment spans residues 169-189; that stretch reads CMQLLTFLICFEGVNAFASLL. Topologically, residues 190-247 are cytoplasmic; that stretch reads KPFVTAFLKKMPLVPSFLRFNAPYLFSLKKGNKEMEEGDIEDAKKKETEYLFKIDFDR. The helical transmembrane segment at 248–265 threads the bilayer; that stretch reads YDIIALLMCSPILISHLL. Residues 266–267 are Lumenal-facing; sequence KR. The helical transmembrane segment at 268–284 threads the bilayer; that stretch reads HWITNNIIGVSFSILGI. Residues 285 to 296 are Cytoplasmic-facing; the sequence is ERLHLASFKAGS. Residues 297-317 traverse the membrane as a helical segment; the sequence is LLLVGLFFYDIFWVFGTDVMT. D306 is an active-site residue. Topologically, residues 318 to 343 are lumenal; that stretch reads SVAKGIDAPILLQFPQDIYRNGIMEA. The chain crosses the membrane as a helical span at residues 344 to 364; that stretch reads SKHSMLGLGDIVIPGIFIALL. Residue D353 is part of the active site. The Cytoplasmic portion of the chain corresponds to 365 to 388; sequence RRFDYRVVQTTAESKAPQGSLKGR. The chain crosses the membrane as a helical span at residues 389–409; sequence YYFVVTVVAYMAGLFITMAVM. The Lumenal portion of the chain corresponds to 410–415; the sequence is HHFKAA. The chain crosses the membrane as a helical span at residues 416–436; sequence QPALLYLVPCCLFVPLLLAVI. Positions 417–419 match the PAL motif; that stretch reads PAL. Residues 437–468 lie on the Cytoplasmic side of the membrane; it reads RGELSALWNYDESRHVDNEENRKKVDSGKKNN.

The protein belongs to the peptidase A22B family.

The protein resides in the membrane. Its subcellular location is the endoplasmic reticulum membrane. Its function is as follows. Acts as intramembrane protease. In larvae, required for the complete shedding of the cuticle during molting, possibly by regulating cholesterol uptake via lrp-1. Involved in embryonic and larval development. The protein is Intramembrane protease 2 of Caenorhabditis elegans.